Reading from the N-terminus, the 757-residue chain is LPS-assembly protein LptD (757 aa).

The first 21 residues, 1–21 (MRRLIPIAITGSLLWGAAVQA), serve as a signal peptide directing secretion.

The protein belongs to the LptD family. In terms of assembly, component of the lipopolysaccharide transport and assembly complex. Interacts with LptE and LptA.

It localises to the cell outer membrane. In terms of biological role, together with LptE, is involved in the assembly of lipopolysaccharide (LPS) at the surface of the outer membrane. The polypeptide is LPS-assembly protein LptD (Alkalilimnicola ehrlichii (strain ATCC BAA-1101 / DSM 17681 / MLHE-1)).